The primary structure comprises 486 residues: UDP-N-acetylmuramate--L-alanine ligase (486 aa).

126–132 (GTHGKTS) is a binding site for ATP.

This sequence belongs to the MurCDEF family.

It is found in the cytoplasm. It carries out the reaction UDP-N-acetyl-alpha-D-muramate + L-alanine + ATP = UDP-N-acetyl-alpha-D-muramoyl-L-alanine + ADP + phosphate + H(+). It participates in cell wall biogenesis; peptidoglycan biosynthesis. Cell wall formation. The sequence is that of UDP-N-acetylmuramate--L-alanine ligase from Buchnera aphidicola subsp. Baizongia pistaciae (strain Bp).